The following is a 254-amino-acid chain: Glucosamine-6-phosphate deaminase (254 aa).

The Proton acceptor; for enolization step role is filled by Asp65. The For ring-opening step role is filled by Asn134. The active-site Proton acceptor; for ring-opening step is His136. Glu141 serves as the catalytic For ring-opening step.

This sequence belongs to the glucosamine/galactosamine-6-phosphate isomerase family. NagB subfamily.

It catalyses the reaction alpha-D-glucosamine 6-phosphate + H2O = beta-D-fructose 6-phosphate + NH4(+). The protein operates within amino-sugar metabolism; N-acetylneuraminate degradation; D-fructose 6-phosphate from N-acetylneuraminate: step 5/5. Functionally, catalyzes the reversible isomerization-deamination of glucosamine 6-phosphate (GlcN6P) to form fructose 6-phosphate (Fru6P) and ammonium ion. The sequence is that of Glucosamine-6-phosphate deaminase from Corynebacterium aurimucosum (strain ATCC 700975 / DSM 44827 / CIP 107346 / CN-1) (Corynebacterium nigricans).